Reading from the N-terminus, the 185-residue chain is Elongation factor P (185 aa).

Belongs to the elongation factor P family.

It is found in the cytoplasm. Its pathway is protein biosynthesis; polypeptide chain elongation. Functionally, involved in peptide bond synthesis. Stimulates efficient translation and peptide-bond synthesis on native or reconstituted 70S ribosomes in vitro. Probably functions indirectly by altering the affinity of the ribosome for aminoacyl-tRNA, thus increasing their reactivity as acceptors for peptidyl transferase. This chain is Elongation factor P, found in Bacillus licheniformis (strain ATCC 14580 / DSM 13 / JCM 2505 / CCUG 7422 / NBRC 12200 / NCIMB 9375 / NCTC 10341 / NRRL NRS-1264 / Gibson 46).